The sequence spans 344 residues: Protein pelota homolog (344 aa).

It belongs to the eukaryotic release factor 1 family. Pelota subfamily. In terms of assembly, monomer. A divalent metal cation serves as cofactor.

The protein resides in the cytoplasm. In terms of biological role, may function in recognizing stalled ribosomes, interact with stem-loop structures in stalled mRNA molecules, and effect endonucleolytic cleavage of the mRNA. May play a role in the release non-functional ribosomes and degradation of damaged mRNAs. Has endoribonuclease activity. This chain is Protein pelota homolog, found in Saccharolobus islandicus (strain M.16.27) (Sulfolobus islandicus).